We begin with the raw amino-acid sequence, 1345 residues long: Aldehyde oxidase 2 (1345 aa).

Positions 9–96 constitute a 2Fe-2S ferredoxin-type domain; that stretch reads DELEFFVNGK…GAAVTTVEGV (88 aa). 4 residues coordinate [2Fe-2S] cluster: Cys48, Cys53, Cys56, and Cys78. Residue Gln117 coordinates Mo-molybdopterin. Positions 118, 121, 153, and 155 each coordinate [2Fe-2S] cluster. A Mo-molybdopterin-binding site is contributed by Cys155. The FAD-binding PCMH-type domain occupies 238-423; that stretch reads FYGERITWIA…GSVYIPHSQK (186 aa). Residues 266–273, Ala347, Ser356, His360, Asp369, and Leu413 each bind FAD; that span reads LISGNTAL. Residues 812–813, 1094–1097, Gln1209, and Leu1274 contribute to the Mo-molybdopterin site; these read GF and ASVG. Catalysis depends on Glu1276, which acts as the Proton acceptor; for azaheterocycle hydroxylase activity.

This sequence belongs to the xanthine dehydrogenase family. As to quaternary structure, homodimer. It depends on [2Fe-2S] cluster as a cofactor. FAD is required as a cofactor. Requires Mo-molybdopterin as cofactor.

The protein resides in the cytoplasm. It catalyses the reaction an aldehyde + O2 + H2O = a carboxylate + H2O2 + H(+). In terms of biological role, oxidase with broad substrate specificity, oxidizing aromatic azaheterocycles, such as phthalazine, as well as aldehydes, such as benzaldehyde and retinal. This chain is Aldehyde oxidase 2 (Aox2), found in Rattus norvegicus (Rat).